Here is a 148-residue protein sequence, read N- to C-terminus: MKYQKLENQEANWKWIYLIRKHREGENITRYEERSLQEAKAQELLESQNYPSQIEEWIKNHLSPALPIKLDQAIRARRKRFFNGEKQHTKKKSIDLEYAVWLRLSKYSRKMKMTLSETITYMIDERESKAQFENQMAAMKTSLKNLLK.

This sequence belongs to the MatP family. As to quaternary structure, homodimer.

It is found in the cytoplasm. In terms of biological role, required for spatial organization of the terminus region of the chromosome (Ter macrodomain) during the cell cycle. Prevents early segregation of duplicated Ter macrodomains during cell division. Binds specifically to matS, which is a 13 bp signature motif repeated within the Ter macrodomain. In Haemophilus influenzae (strain PittGG), this protein is Macrodomain Ter protein.